The chain runs to 510 residues: tRNA-2-methylthio-N(6)-dimethylallyladenosine synthase (510 aa).

In terms of domain architecture, MTTase N-terminal spans 19–135; sequence RTFEVRTYGC…LPALLDRARH (117 aa). Cys28, Cys64, Cys98, Cys172, Cys176, and Cys179 together coordinate [4Fe-4S] cluster. In terms of domain architecture, Radical SAM core spans 158–394; sequence RESSYAAWVS…IELQERISLE (237 aa). Positions 397–467 constitute a TRAM domain; it reads TAQIGRRVEL…PHHLIADAGL (71 aa). The tract at residues 477–510 is disordered; sequence DAHAAGQKPRTGVGLGMPAVGAPDPLPATTGCAR.

This sequence belongs to the methylthiotransferase family. MiaB subfamily. As to quaternary structure, monomer. The cofactor is [4Fe-4S] cluster.

The protein localises to the cytoplasm. It carries out the reaction N(6)-dimethylallyladenosine(37) in tRNA + (sulfur carrier)-SH + AH2 + 2 S-adenosyl-L-methionine = 2-methylsulfanyl-N(6)-dimethylallyladenosine(37) in tRNA + (sulfur carrier)-H + 5'-deoxyadenosine + L-methionine + A + S-adenosyl-L-homocysteine + 2 H(+). Functionally, catalyzes the methylthiolation of N6-(dimethylallyl)adenosine (i(6)A), leading to the formation of 2-methylthio-N6-(dimethylallyl)adenosine (ms(2)i(6)A) at position 37 in tRNAs that read codons beginning with uridine. The chain is tRNA-2-methylthio-N(6)-dimethylallyladenosine synthase from Mycolicibacterium vanbaalenii (strain DSM 7251 / JCM 13017 / BCRC 16820 / KCTC 9966 / NRRL B-24157 / PYR-1) (Mycobacterium vanbaalenii).